The chain runs to 107 residues: UPF0145 protein Sfri_2095 (107 aa).

The protein belongs to the UPF0145 family.

The chain is UPF0145 protein Sfri_2095 from Shewanella frigidimarina (strain NCIMB 400).